The primary structure comprises 243 residues: 4-hydroxy-tetrahydrodipicolinate reductase (243 aa).

NAD(+) contacts are provided by residues 9–14, 78–80, and 104–107; these read GANGKM, GTS, and APNF. H134 (proton donor/acceptor) is an active-site residue. H135 is a (S)-2,3,4,5-tetrahydrodipicolinate binding site. Residue K138 is the Proton donor of the active site. 144–145 contacts (S)-2,3,4,5-tetrahydrodipicolinate; sequence GT.

It belongs to the DapB family.

The protein resides in the cytoplasm. It carries out the reaction (S)-2,3,4,5-tetrahydrodipicolinate + NAD(+) + H2O = (2S,4S)-4-hydroxy-2,3,4,5-tetrahydrodipicolinate + NADH + H(+). It catalyses the reaction (S)-2,3,4,5-tetrahydrodipicolinate + NADP(+) + H2O = (2S,4S)-4-hydroxy-2,3,4,5-tetrahydrodipicolinate + NADPH + H(+). It functions in the pathway amino-acid biosynthesis; L-lysine biosynthesis via DAP pathway; (S)-tetrahydrodipicolinate from L-aspartate: step 4/4. Functionally, catalyzes the conversion of 4-hydroxy-tetrahydrodipicolinate (HTPA) to tetrahydrodipicolinate. This chain is 4-hydroxy-tetrahydrodipicolinate reductase, found in Legionella pneumophila (strain Paris).